The chain runs to 908 residues: Probable disease resistance RPP8-like protein 4 (908 aa).

Residues 15 to 57 (DLLSRESERLQGIDEQLDGLKRQLRSLQSLLKDADAKKHGSDR) are a coiled coil. Residues 146–459 (RQRVQREIRQ…AEGIYDGSTI (314 aa)) enclose the NB-ARC domain. 192–199 (GMGGIGKT) contributes to the ATP binding site. LRR repeat units follow at residues 575–599 (LTLL…SIGG), 600–623 (LIHL…MRNL), and 842–867 (MPCL…KYIT).

The protein belongs to the disease resistance NB-LRR family. RPP8/HRT subfamily.

Functionally, potential disease resistance protein. The chain is Probable disease resistance RPP8-like protein 4 (RPP8L4) from Arabidopsis thaliana (Mouse-ear cress).